The following is a 205-amino-acid chain: Guanylate kinase (205 aa).

The Guanylate kinase-like domain maps to 17 to 195 (SRLLVLSGPS…AVEAVERLLF (179 aa)). 24 to 31 (GPSGVGKD) serves as a coordination point for ATP.

It belongs to the guanylate kinase family.

It is found in the cytoplasm. It carries out the reaction GMP + ATP = GDP + ADP. Functionally, essential for recycling GMP and indirectly, cGMP. In Gloeobacter violaceus (strain ATCC 29082 / PCC 7421), this protein is Guanylate kinase.